Here is a 443-residue protein sequence, read N- to C-terminus: Phosphoglucosamine mutase (443 aa).

S101 (phosphoserine intermediate) is an active-site residue. Residues S101, D239, D241, and D243 each coordinate Mg(2+). S101 bears the Phosphoserine mark.

This sequence belongs to the phosphohexose mutase family. It depends on Mg(2+) as a cofactor. Post-translationally, activated by phosphorylation.

It carries out the reaction alpha-D-glucosamine 1-phosphate = D-glucosamine 6-phosphate. In terms of biological role, catalyzes the conversion of glucosamine-6-phosphate to glucosamine-1-phosphate. The sequence is that of Phosphoglucosamine mutase from Francisella tularensis subsp. holarctica (strain FTNF002-00 / FTA).